Consider the following 133-residue polypeptide: ATP synthase epsilon chain, chloroplastic (133 aa).

The protein belongs to the ATPase epsilon chain family. F-type ATPases have 2 components, CF(1) - the catalytic core - and CF(0) - the membrane proton channel. CF(1) has five subunits: alpha(3), beta(3), gamma(1), delta(1), epsilon(1). CF(0) has three main subunits: a, b and c.

Its subcellular location is the plastid. It localises to the chloroplast thylakoid membrane. Produces ATP from ADP in the presence of a proton gradient across the membrane. The sequence is that of ATP synthase epsilon chain, chloroplastic from Atropa belladonna (Belladonna).